Reading from the N-terminus, the 107-residue chain is uncharacterized protein (107 aa).

This is an uncharacterized protein from Autographa californica nuclear polyhedrosis virus (AcMNPV).